Here is a 544-residue protein sequence, read N- to C-terminus: Cytochrome P450 2U1 (544 aa).

4 consecutive transmembrane segments (helical) span residues 30–50 (LDPSGGALLLCGLVALLGWSW), 113–133 (VYGSIFSFFIGHYLVVVLSDF), 261–281 (ICLNSQVLLVNICPWLYYLPF), and 342–362 (LFYIIGDLFIAGTDTTTNSLL). C490 is a heme binding site. Residues 495–515 (LAKMELFLMFVSLMQSFAFAL) form a helical membrane-spanning segment.

Belongs to the cytochrome P450 family. Heme is required as a cofactor. In terms of tissue distribution, widely expressed with stronger expression in thymus, heart and cerebellum.

Its subcellular location is the endoplasmic reticulum membrane. The protein localises to the microsome membrane. It is found in the mitochondrion inner membrane. The catalysed reaction is an omega-methyl-long-chain fatty acid + reduced [NADPH--hemoprotein reductase] + O2 = an omega-hydroxy-long-chain fatty acid + oxidized [NADPH--hemoprotein reductase] + H2O + H(+). It catalyses the reaction (5Z,8Z,11Z,14Z)-eicosatetraenoate + reduced [NADPH--hemoprotein reductase] + O2 = 19-hydroxy-(5Z,8Z,11Z,14Z)-eicosatetraenoate + oxidized [NADPH--hemoprotein reductase] + H2O + H(+). It carries out the reaction (5Z,8Z,11Z,14Z)-eicosatetraenoate + reduced [NADPH--hemoprotein reductase] + O2 = 20-hydroxy-(5Z,8Z,11Z,14Z)-eicosatetraenoate + oxidized [NADPH--hemoprotein reductase] + H2O + H(+). The enzyme catalyses N-[(5Z,8Z,11Z,14Z)-eicosatetraenoyl]-serotonin + reduced [NADPH--hemoprotein reductase] + O2 = 2-oxo-N-[(5Z,8Z,11Z,14Z)-eicosatetraenoyl]-serotonin + oxidized [NADPH--hemoprotein reductase] + H2O + H(+). Its pathway is lipid metabolism; arachidonate metabolism. In terms of biological role, a cytochrome P450 monooxygenase involved in the metabolism of arachidonic acid and its conjugates. Mechanistically, uses molecular oxygen inserting one oxygen atom into a substrate, and reducing the second into a water molecule, with two electrons provided by NADPH via cytochrome P450 reductase (CPR; NADPH-ferrihemoprotein reductase). Acts as an omega and omega-1 hydroxylase for arachidonic acid and possibly for other long chain fatty acids. May modulate the arachidonic acid signaling pathway and play a role in other fatty acid signaling processes. May down-regulate the biological activities of N-arachidonoyl-serotonin, an endocannabinoid that has anti-nociceptive effects through inhibition of fatty acid amide hydrolase FAAH, TRPV1 receptor and T-type calcium channels. Catalyzes C-2 oxidation of the indole ring of N-arachidonoyl-serotonin forming a less active product 2-oxo-N-arachidonoyl-serotonin. The protein is Cytochrome P450 2U1 of Homo sapiens (Human).